Consider the following 171-residue polypeptide: Moubatin (171 aa).

The N-terminal stretch at 1–15 (MMLVLTTLIFSFSAS) is a signal peptide. 3 disulfide bridges follow: C23–C144, C55–C166, and C118–C145.

Belongs to the calycin superfamily. Lipocalin family. Post-translationally, the N-terminus is blocked. As to expression, expressed in salivary glands.

The protein resides in the secreted. Its function is as follows. Tick salivary platelet aggregation inhibitor that plays an important part in the anti-hemostatic strategy of ticks. Acts by scavenging thromboxane A2 (TXA2), a potent inducer of platelet aggregation and blood vessel constriction. As a consequence, is a specific inhibitor of collagen-induced platelet aggregation. In addition, it also acts as a potent inhibitor of TXA2-mediated vasoconstriction. Has also been found to bind leukotriene B4 (LTB4) (which also derives from arachidonic acid, as TXA2) with affinities in the nanomolar range. It does not interact with complement protein C5. The protein is Moubatin of Ornithodoros moubata (Soft tick).